The sequence spans 215 residues: Floral homeotic protein GLOBOSA (215 aa).

The MADS-box domain occupies 3–57 (RGKIEIKRIENSSNRQVTYSKRRNGIMKKAKEISVLCDAHVSVIIFASSGKMHEF). Positions 84–170 (HEHLDNEINR…QFKLRQMHLD (87 aa)) constitute a K-box domain.

It localises to the nucleus. Its function is as follows. Transcription factor involved in the genetic control of flower development. Acts in conjunction with DEFICIENS (defA). In Antirrhinum majus (Garden snapdragon), this protein is Floral homeotic protein GLOBOSA (GLO).